Here is a 318-residue protein sequence, read N- to C-terminus: Ribose-phosphate pyrophosphokinase 2 (318 aa).

96–101 (RQDKKD) is an ATP binding site. Mg(2+) contacts are provided by D128, H130, D139, and D143. Position 130 (H130) interacts with ATP. The interval 212 to 227 (KDRVAILVDDMADTCG) is binding of phosphoribosylpyrophosphate.

Belongs to the ribose-phosphate pyrophosphokinase family. Homodimer. The active form is probably a hexamer composed of 3 homodimers. It depends on Mg(2+) as a cofactor.

The catalysed reaction is D-ribose 5-phosphate + ATP = 5-phospho-alpha-D-ribose 1-diphosphate + AMP + H(+). The protein operates within metabolic intermediate biosynthesis; 5-phospho-alpha-D-ribose 1-diphosphate biosynthesis; 5-phospho-alpha-D-ribose 1-diphosphate from D-ribose 5-phosphate (route I): step 1/1. With respect to regulation, activated by magnesium and inorganic phosphate. Competitively or non-competitively inhibited by ADP, 2,3-bisphosphoglyceride or GDP. Its function is as follows. Catalyzes the synthesis of phosphoribosylpyrophosphate (PRPP) that is essential for nucleotide synthesis. The protein is Ribose-phosphate pyrophosphokinase 2 (Prps2) of Mus musculus (Mouse).